The following is a 289-amino-acid chain: uncharacterized protein (289 aa).

Residues 1-23 (MIKNYKLLLFTTFTLFFITFVSG) form the signal peptide. Residues Asn74, Asn101, Asn132, and Asn285 are each glycosylated (N-linked (GlcNAc...) asparagine).

It is found in the secreted. This is an uncharacterized protein from Dictyostelium discoideum (Social amoeba).